The primary structure comprises 889 residues: Protein translocase subunit SecA (889 aa).

Residues Q87, 105-109 (GEGKT), and D494 contribute to the ATP site. The disordered stretch occupies residues 823–889 (ESLRPEEADL…RMDKDTKGKR (67 aa)). The segment covering 867 to 889 (PRDDRPMNREERRRMDKDTKGKR) has biased composition (basic and acidic residues).

The protein belongs to the SecA family. As to quaternary structure, monomer and homodimer. Part of the essential Sec protein translocation apparatus which comprises SecA, SecYEG and auxiliary proteins SecDF-YajC and YidC.

The protein resides in the cell inner membrane. Its subcellular location is the cytoplasm. The enzyme catalyses ATP + H2O + cellular proteinSide 1 = ADP + phosphate + cellular proteinSide 2.. Part of the Sec protein translocase complex. Interacts with the SecYEG preprotein conducting channel. Has a central role in coupling the hydrolysis of ATP to the transfer of proteins into and across the cell membrane, serving as an ATP-driven molecular motor driving the stepwise translocation of polypeptide chains across the membrane. This chain is Protein translocase subunit SecA, found in Bdellovibrio bacteriovorus (strain ATCC 15356 / DSM 50701 / NCIMB 9529 / HD100).